The following is a 446-amino-acid chain: Phosphoglucosamine mutase (446 aa).

The active-site Phosphoserine intermediate is serine 100. Residues serine 100, aspartate 241, aspartate 243, and aspartate 245 each contribute to the Mg(2+) site. Serine 100 is subject to Phosphoserine.

This sequence belongs to the phosphohexose mutase family. It depends on Mg(2+) as a cofactor. In terms of processing, activated by phosphorylation.

The enzyme catalyses alpha-D-glucosamine 1-phosphate = D-glucosamine 6-phosphate. Its function is as follows. Catalyzes the conversion of glucosamine-6-phosphate to glucosamine-1-phosphate. The protein is Phosphoglucosamine mutase of Methylorubrum populi (strain ATCC BAA-705 / NCIMB 13946 / BJ001) (Methylobacterium populi).